Reading from the N-terminus, the 76-residue chain is Sea anemone sodium channel inhibitor type I (76 aa).

Residues 1–19 (MNRMLIIFVVVTVFGLASG) form the signal peptide. Positions 20-30 (LGPNMPAPDLA) are excised as a propeptide. 3 cysteine pairs are disulfide-bonded: cysteine 37/cysteine 72, cysteine 39/cysteine 60, and cysteine 53/cysteine 73.

Belongs to the sea anemone sodium channel inhibitory toxin family. Type I subfamily. In terms of tissue distribution, expressed in acontia, a specialised envenomation structure laden with batteries of venom-containing nematocysts found only in the superfamily Metridioidea.

Its subcellular location is the secreted. It is found in the nematocyst. Functionally, may affect sodium channels (Nav). This chain is Sea anemone sodium channel inhibitor type I, found in Calliactis polypus (Hermit crab anemone).